The chain runs to 388 residues: Succinate--CoA ligase [ADP-forming] subunit beta (388 aa).

An ATP-grasp domain is found at 9–244 (KEIFRSMGVA…LEEEDPKEIE (236 aa)). ATP is bound by residues Lys46, 53 to 55 (GRG), Glu99, Cys102, and Glu107. The Mg(2+) site is built by Asn199 and Asp213. Substrate is bound by residues Asn264 and 321–323 (GIM).

Belongs to the succinate/malate CoA ligase beta subunit family. As to quaternary structure, heterotetramer of two alpha and two beta subunits. Mg(2+) serves as cofactor.

The catalysed reaction is succinate + ATP + CoA = succinyl-CoA + ADP + phosphate. It carries out the reaction GTP + succinate + CoA = succinyl-CoA + GDP + phosphate. The protein operates within carbohydrate metabolism; tricarboxylic acid cycle; succinate from succinyl-CoA (ligase route): step 1/1. In terms of biological role, succinyl-CoA synthetase functions in the citric acid cycle (TCA), coupling the hydrolysis of succinyl-CoA to the synthesis of either ATP or GTP and thus represents the only step of substrate-level phosphorylation in the TCA. The beta subunit provides nucleotide specificity of the enzyme and binds the substrate succinate, while the binding sites for coenzyme A and phosphate are found in the alpha subunit. The chain is Succinate--CoA ligase [ADP-forming] subunit beta from Staphylococcus aureus (strain bovine RF122 / ET3-1).